Consider the following 227-residue polypeptide: UPF0173 metal-dependent hydrolase BCE_4747 (227 aa).

The protein belongs to the UPF0173 family.

In Bacillus cereus (strain ATCC 10987 / NRS 248), this protein is UPF0173 metal-dependent hydrolase BCE_4747.